Consider the following 597-residue polypeptide: tRNA uridine 5-carboxymethylaminomethyl modification enzyme MnmG (597 aa).

Position 10-15 (10-15) interacts with FAD; that stretch reads GGGHAG. 267–281 contacts NAD(+); the sequence is GPRYCPSIEDKVVRF.

It belongs to the MnmG family. Homodimer. Heterotetramer of two MnmE and two MnmG subunits. FAD is required as a cofactor.

It is found in the cytoplasm. Functionally, NAD-binding protein involved in the addition of a carboxymethylaminomethyl (cmnm) group at the wobble position (U34) of certain tRNAs, forming tRNA-cmnm(5)s(2)U34. In Thermus thermophilus (strain ATCC 27634 / DSM 579 / HB8), this protein is tRNA uridine 5-carboxymethylaminomethyl modification enzyme MnmG.